The following is a 49-amino-acid chain: U6-myrmicitoxin-Mri1a (49 aa).

Residues Met-1–Ala-27 form the signal peptide. Positions Asn-28–Ala-35 are excised as a propeptide.

Post-translationally, contains 1 disulfide bond. In terms of tissue distribution, expressed by the venom gland.

The protein resides in the secreted. The sequence is that of U6-myrmicitoxin-Mri1a from Manica rubida (European giant red ant).